The sequence spans 67 residues: FQTPPDLCQLPQARGPCKAALLRYFYNSTSNACEPFTYGGCQGNNBNFETTEMCLRICEPPQQTDKS.

The BPTI/Kunitz inhibitor domain maps to 8-58; the sequence is CQLPQARGPCKAALLRYFYNSTSNACEPFTYGGCQGNNBNFETTEMCLRIC. Cystine bridges form between Cys-8-Cys-58, Cys-17-Cys-41, and Cys-33-Cys-54. N-linked (GlcNAc...) asparagine glycosylation is present at Asn-27.

The protein resides in the secreted. The protein is Colostrum trypsin inhibitor of Bos taurus (Bovine).